The sequence spans 306 residues: D-alanine--D-alanine ligase (306 aa).

An ATP-grasp domain is found at 107-300 (KAAYRTAGLP…FGQLCAWLVE (194 aa)). 134 to 184 (IAPPYVVKPNNEGSSVGIYIVHEATNSPPQLSEEMPAQVMVEAYAPGREMT) is an ATP binding site. Positions 251, 267, and 269 each coordinate Mg(2+).

The protein belongs to the D-alanine--D-alanine ligase family. Mg(2+) serves as cofactor. Requires Mn(2+) as cofactor.

Its subcellular location is the cytoplasm. The catalysed reaction is 2 D-alanine + ATP = D-alanyl-D-alanine + ADP + phosphate + H(+). Its pathway is cell wall biogenesis; peptidoglycan biosynthesis. Its function is as follows. Cell wall formation. This Ruegeria sp. (strain TM1040) (Silicibacter sp.) protein is D-alanine--D-alanine ligase.